Consider the following 222-residue polypeptide: Capsular polysaccharide type 5 biosynthesis protein cap5A (222 aa).

Transmembrane regions (helical) follow at residues 20 to 40 (ILII…FFVL) and 172 to 192 (VVNL…YIFF).

This sequence belongs to the CpsC/CapA family.

The protein localises to the cell membrane. Its function is as follows. Required for the biosynthesis of type 5 capsular polysaccharide (Cap5/CP5). Might act as the chain-length regulator. This Staphylococcus aureus (strain Newman) protein is Capsular polysaccharide type 5 biosynthesis protein cap5A (cap5A).